The sequence spans 188 residues: Probable nicotinate-nucleotide adenylyltransferase (188 aa).

This sequence belongs to the NadD family.

The enzyme catalyses nicotinate beta-D-ribonucleotide + ATP + H(+) = deamido-NAD(+) + diphosphate. It functions in the pathway cofactor biosynthesis; NAD(+) biosynthesis; deamido-NAD(+) from nicotinate D-ribonucleotide: step 1/1. Its function is as follows. Catalyzes the reversible adenylation of nicotinate mononucleotide (NaMN) to nicotinic acid adenine dinucleotide (NaAD). The chain is Probable nicotinate-nucleotide adenylyltransferase from Salinispora arenicola (strain CNS-205).